The following is a 399-amino-acid chain: MAGTADLPLEMRRNGLNPTEELAQVRDRDGVIPVGELYGAPAFLVCRYEDVRRIFADSNRFSNAHTPMFAIPSGGDVIEDELAAMRAGNLIGLDPPDHTRLRHILAAEFSVHRLSRLQPRIAEIVDSALDGLEQAGQPADLMDRYALPVSLLVLCELLGVPYADRDELRDRTARLLDLSASAEQRAVAQREDRRYMATLVTRAQEQPGDDLLGILARKIGDNLSTDELISIISLIMLGGHETTASMIGLSVLALLHHPEQAAMMIEDPNCVNSGIEELLRWLSVAHSQPPRMAVTEVQIAGVTIPAGSFVIPSLLAANRDSNLTDRPDDLDITRGVAGHLAFGHGVHFCLGHSLARMTLRTAVPAVLRRFPDLALSPSHDVRLRSASIVLGLEELQLTW.

Cysteine 349 contributes to the heme binding site.

It belongs to the cytochrome P450 family. Heme is required as a cofactor.

Its subcellular location is the cytoplasm. Functionally, may be involved in the biosynthesis of cytokinin phytohormones and in host plant fasciation (leafy gall). The polypeptide is Cytochrome P450 FAS1 (fas1) (Rhodococcoides fascians (Rhodococcus fascians)).